An 84-amino-acid chain; its full sequence is Metallothionein-like protein 4A (84 aa).

The segment at 1-26 (MADTGKGSSVAGCNDSCGCPSPCPGG) is disordered.

It belongs to the metallothionein superfamily. Type 15 family. In terms of tissue distribution, expressed specifically in seeds.

It localises to the cytoplasm. Its subcellular location is the nucleus. The protein localises to the cell membrane. Functionally, metallothioneins have a high content of cysteine residues that bind various heavy metals. Functions as a metal chelator of copper (Cu) and zinc (Zn). Plays a role in storing and distributing Zn ion in seed. The chain is Metallothionein-like protein 4A (MT4A) from Arabidopsis thaliana (Mouse-ear cress).